Reading from the N-terminus, the 830-residue chain is Leucine--tRNA ligase (830 aa).

A 'HIGH' region motif is present at residues 42 to 52 (PYPSGNLHMGH). The short motif at 585 to 589 (KMSKS) is the 'KMSKS' region element. Position 588 (lysine 588) interacts with ATP.

Belongs to the class-I aminoacyl-tRNA synthetase family.

The protein resides in the cytoplasm. The enzyme catalyses tRNA(Leu) + L-leucine + ATP = L-leucyl-tRNA(Leu) + AMP + diphosphate. The sequence is that of Leucine--tRNA ligase from Halothermothrix orenii (strain H 168 / OCM 544 / DSM 9562).